Reading from the N-terminus, the 92-residue chain is Small ribosomal subunit protein uS19 (92 aa).

Belongs to the universal ribosomal protein uS19 family.

Its function is as follows. Protein S19 forms a complex with S13 that binds strongly to the 16S ribosomal RNA. The protein is Small ribosomal subunit protein uS19 of Rhodospirillum rubrum (strain ATCC 11170 / ATH 1.1.1 / DSM 467 / LMG 4362 / NCIMB 8255 / S1).